We begin with the raw amino-acid sequence, 155 residues long: Small ribosomal subunit protein uS7 (155 aa).

It belongs to the universal ribosomal protein uS7 family. As to quaternary structure, part of the 30S ribosomal subunit. Contacts proteins S9 and S11.

In terms of biological role, one of the primary rRNA binding proteins, it binds directly to 16S rRNA where it nucleates assembly of the head domain of the 30S subunit. Is located at the subunit interface close to the decoding center, probably blocks exit of the E-site tRNA. In Thermosipho africanus (strain TCF52B), this protein is Small ribosomal subunit protein uS7.